A 290-amino-acid chain; its full sequence is MFHFSIGTVLISICWLAQWMEAKSQRIDPDAENELWDSIKHTKVQNIVEKNAIGEINSPPTDGTPYLKVVCISDTHEQLHNVTVPDGDVLIHAGDFTNNGKREELIKFNEEMTRFPHKYKLVVAGNHELGFDHDENQGERQDADKGLGTEDGYNILTNVTYLQDKGVTIDGVTFFGSSYHPLRGFPFYRNRAEQLAECWKAVPNDTNVLITHTPPLGYLDQFGDERWGCRDLLKTVERIQPAYHIFGHVHEQHGVLSNGNTTFINAAQCNKGNQIQTRPIVFYIPKKTLS.

A signal peptide spans 1-22; it reads MFHFSIGTVLISICWLAQWMEA. An N-linked (GlcNAc...) asparagine glycan is attached at N204.

Belongs to the UPF0046 family.

The protein is UPF0046 protein K07C11.7 of Caenorhabditis elegans.